Reading from the N-terminus, the 115-residue chain is Mediator of RNA polymerase II transcription subunit 31 (115 aa).

The protein belongs to the Mediator complex subunit 31 family. In terms of assembly, component of the Mediator complex.

It is found in the nucleus. In terms of biological role, component of the Mediator complex, a coactivator involved in the regulated transcription of nearly all RNA polymerase II-dependent genes. Mediator functions as a bridge to convey information from gene-specific regulatory proteins to the basal RNA polymerase II transcription machinery. Mediator is recruited to promoters by direct interactions with regulatory proteins and serves as a scaffold for the assembly of a functional preinitiation complex with RNA polymerase II and the general transcription factors. The polypeptide is Mediator of RNA polymerase II transcription subunit 31 (SOH1) (Phaeosphaeria nodorum (strain SN15 / ATCC MYA-4574 / FGSC 10173) (Glume blotch fungus)).